Consider the following 336-residue polypeptide: Dihydroorotate dehydrogenase (quinone) (336 aa).

Residues 62–66 (AGLDK) and Thr86 contribute to the FMN site. Lys66 lines the substrate pocket. 111–115 (NRMGF) serves as a coordination point for substrate. Residues Asn139 and Asn172 each coordinate FMN. Asn172 contacts substrate. The active-site Nucleophile is the Ser175. Position 177 (Asn177) interacts with substrate. 2 residues coordinate FMN: Lys217 and Thr245. Residue 246–247 (NT) participates in substrate binding. FMN-binding positions include Gly268, Gly297, and 318-319 (YT).

The protein belongs to the dihydroorotate dehydrogenase family. Type 2 subfamily. Monomer. FMN is required as a cofactor.

The protein localises to the cell membrane. It carries out the reaction (S)-dihydroorotate + a quinone = orotate + a quinol. It participates in pyrimidine metabolism; UMP biosynthesis via de novo pathway; orotate from (S)-dihydroorotate (quinone route): step 1/1. Catalyzes the conversion of dihydroorotate to orotate with quinone as electron acceptor. This chain is Dihydroorotate dehydrogenase (quinone), found in Pseudoalteromonas translucida (strain TAC 125).